We begin with the raw amino-acid sequence, 483 residues long: Myocilin (483 aa).

Positions 1–18 (MPTAQLLLLACLLWGLEA) are cleaved as a signal peptide. The N-linked (GlcNAc...) asparagine glycan is linked to Asn43. Residues 51–162 (GQAMSAIQDL…SQEVARLRRG (112 aa)) adopt a coiled-coil conformation. The segment at 153 to 179 (SQEVARLRRGQCPQAHSSSQDVPAGSR) is disordered. In terms of domain architecture, Olfactomedin-like spans 223-482 (GCGELVWVGE…MVTYDIRLSK (260 aa)). Residues Cys224 and Cys412 are joined by a disulfide bond. The Ca(2+) site is built by Asp359, Asn407, Ala408, Ile456, and Asp457. The Microbody targeting signal motif lies at 481–483 (SKM).

As to quaternary structure, homodimer (via N-terminus). Can also form higher oligomers. Interacts with OLFM3, FN1, NRCAM, GLDN and NFASC. Interacts (via N-terminus) with MYL2. Interacts with SFRP1, FRZB, FZD7, FZD10, FZD1 and WIF1; regulates Wnt signaling. Interacts with SNTA1; regulates muscle hypertrophy. Interacts with ERBB2 and ERBB3; activates ERBB2-ERBB3 signaling pathway. Interacts with SNCG; affects its secretion and its aggregation. Post-translationally, N-glycosylated. In terms of processing, palmitoylated. Undergoes a calcium-dependent proteolytic cleavage at Arg-205 by CAPN2 in the endoplasmic reticulum. The result is the production of two fragments, one of 35 kDa containing the C-terminal olfactomedin-like domain, and another of 20 kDa containing the N-terminal leucine zipper-like domain. Expressed in optic nerve head, ciliary body and retina.

The protein localises to the secreted. It localises to the golgi apparatus. It is found in the cytoplasmic vesicle. Its subcellular location is the extracellular space. The protein resides in the extracellular matrix. The protein localises to the extracellular exosome. It localises to the mitochondrion. It is found in the mitochondrion intermembrane space. Its subcellular location is the mitochondrion inner membrane. The protein resides in the mitochondrion outer membrane. The protein localises to the rough endoplasmic reticulum. It localises to the cell projection. It is found in the cilium. Its subcellular location is the endoplasmic reticulum. Its function is as follows. Secreted glycoprotein regulating the activation of different signaling pathways in adjacent cells to control different processes including cell adhesion, cell-matrix adhesion, cytoskeleton organization and cell migration. Promotes substrate adhesion, spreading and formation of focal contacts. Negatively regulates cell-matrix adhesion and stress fiber assembly through Rho protein signal transduction. Modulates the organization of actin cytoskeleton by stimulating the formation of stress fibers through interactions with components of Wnt signaling pathways. Promotes cell migration through activation of PTK2 and the downstream phosphatidylinositol 3-kinase signaling. Plays a role in bone formation and promotes osteoblast differentiation in a dose-dependent manner through mitogen-activated protein kinase signaling. Mediates myelination in the peripheral nervous system through ERBB2/ERBB3 signaling. Plays a role as a regulator of muscle hypertrophy through the components of dystrophin-associated protein complex. Involved in positive regulation of mitochondrial depolarization. Plays a role in neurite outgrowth. May participate in the obstruction of fluid outflow in the trabecular meshwork. This Canis lupus familiaris (Dog) protein is Myocilin (MYOC).